We begin with the raw amino-acid sequence, 868 residues long: Probable mixed-linked glucan synthase 3 (868 aa).

Positions 36–68 are disordered; it reads ERKAAGGGGGGAKGKHWAAADKGERRAAKECGG. The span at 53–68 shows a compositional bias: basic and acidic residues; sequence AAADKGERRAAKECGG. The next 2 membrane-spanning stretches (helical) occupy residues 86–106 and 116–136; these read LLHP…LFFG and IMWF…SWLL. The active site involves aspartate 211. Residues aspartate 412 and aspartate 414 each contribute to the substrate site. The active site involves aspartate 573. A run of 6 helical transmembrane segments spans residues 649 to 669, 686 to 706, 717 to 737, 771 to 791, 809 to 829, and 837 to 857; these read IYPV…MWLI, LLMI…WAGI, FFMI…VVNL, MLIP…VAIG, IMGL…ALAI, and PIIL…VYVA.

It belongs to the glycosyltransferase 2 family. Plant cellulose synthase-like F subfamily.

Its subcellular location is the golgi apparatus membrane. In terms of biological role, may catalyze both beta-1,3 and beta-1,4 glycosidic linkage on beta-D-glucan. Essential for (1,3;1,4)-beta-D-glucans synthesis in grasses and cereals (Poaceae). The mixed-linked glucans (which are not present in walls of dicotyledons or most other monocotyledonous plants) are particularly important constituents of the walls of the starchy endosperm and aleurone cells of cereal grains such as oats, wheat, rice and barley. They can account for up to 70% by weight of the wall. This chain is Probable mixed-linked glucan synthase 3 (CSLF3), found in Oryza sativa subsp. indica (Rice).